The chain runs to 359 residues: Cytochrome c oxidase subunit 2 (359 aa).

Residues 1 to 28 (MEQQNKRGLKRKALLGGVLGLGGLAMAG) form the signal peptide. Cys29 carries the S-diacylglycerol cysteine lipid modification. The next 2 membrane-spanning stretches (helical) occupy residues 64-84 (VWVA…TAIF) and 107-127 (VPLE…LFFF). The tract at residues 168–203 (PGGQDYQGSDPERQAAAEASKKDPSGDNPIHGNSKS) is disordered. Over residues 177-192 (DPERQAAAEASKKDPS) the composition is skewed to basic and acidic residues. Cu cation contacts are provided by His244, Cys285, Glu287, Cys289, His293, and Met296. The disordered stretch occupies residues 335–359 (YATSTSPFVSDRTATRDGENTQSNA).

As to quaternary structure, associates with subunits I, III and IV to form cytochrome c oxidase. The 4 subunit cytochrome c oxidase forms a supercomplex with the menaquinol-cytochrome c reductase complex (cytochrome bc1). The cofactor is binuclear copper center (CuA).

Its subcellular location is the cell membrane. The catalysed reaction is 4 Fe(II)-[cytochrome c] + O2 + 8 H(+)(in) = 4 Fe(III)-[cytochrome c] + 2 H2O + 4 H(+)(out). In terms of biological role, subunits I and II form the functional core of the enzyme complex. Electrons originating in cytochrome c are transferred via heme a and Cu(A) to the binuclear center formed by heme a3 and Cu(B). The sequence is that of Cytochrome c oxidase subunit 2 (ctaC) from Corynebacterium glutamicum (strain ATCC 13032 / DSM 20300 / JCM 1318 / BCRC 11384 / CCUG 27702 / LMG 3730 / NBRC 12168 / NCIMB 10025 / NRRL B-2784 / 534).